Consider the following 94-residue polypeptide: MPRLLRYGSFSVVASVLGASYYYYAVASPLYTEAEWHRVSQRTAALIDRRIDIPVPESTTERREYVVRSSKETMKDIWNEQIRSIVDWIYSWSH.

Residues 7–23 form a helical membrane-spanning segment; that stretch reads YGSFSVVASVLGASYYY.

This sequence belongs to the MICOS complex subunit Mic12 family. Component of the mitochondrial contact site and cristae organizing system (MICOS) complex.

It is found in the mitochondrion inner membrane. Functionally, component of the MICOS complex, a large protein complex of the mitochondrial inner membrane that plays crucial roles in the maintenance of crista junctions, inner membrane architecture, and formation of contact sites to the outer membrane. This Eremothecium gossypii (strain ATCC 10895 / CBS 109.51 / FGSC 9923 / NRRL Y-1056) (Yeast) protein is MICOS complex subunit MIC12 (AIM5).